Reading from the N-terminus, the 241-residue chain is Type III pantothenate kinase (241 aa).

6–13 (DVGNTRIK) is an ATP binding site. 94 to 97 (GIDR) contributes to the substrate binding site. Asp-96 (proton acceptor) is an active-site residue. Asp-117 is a binding site for K(+). An ATP-binding site is contributed by Thr-120. Thr-172 is a substrate binding site.

This sequence belongs to the type III pantothenate kinase family. Homodimer. NH4(+) serves as cofactor. K(+) is required as a cofactor.

The protein localises to the cytoplasm. It catalyses the reaction (R)-pantothenate + ATP = (R)-4'-phosphopantothenate + ADP + H(+). It functions in the pathway cofactor biosynthesis; coenzyme A biosynthesis; CoA from (R)-pantothenate: step 1/5. Catalyzes the phosphorylation of pantothenate (Pan), the first step in CoA biosynthesis. In Flavobacterium psychrophilum (strain ATCC 49511 / DSM 21280 / CIP 103535 / JIP02/86), this protein is Type III pantothenate kinase.